The following is a 239-amino-acid chain: Retrotransposon Gag-like protein 6 (239 aa).

Residues 29–69 (LTSLRLTNSALRREASTLRAEKANLTNMLESVMAELTLLRT) are a coiled coil. Residues 82-94 (PISSITSNGTRPM) show a composition bias toward polar residues. 2 disordered regions span residues 82-106 (PISS…EPFS) and 214-239 (TGPC…ARNL). Residues 228–239 (PAPALPARARNL) are compositionally biased toward low complexity.

It belongs to the LDOC1 family.

In Homo sapiens (Human), this protein is Retrotransposon Gag-like protein 6.